We begin with the raw amino-acid sequence, 485 residues long: Efflux pump bik6 (485 aa).

Helical transmembrane passes span 42–62, 86–106, 108–128, 139–159, 172–192, and 199–219; these read VYTT…SAIY, LLIF…EVYG, KWPA…TATA, FFAG…IVDI, YGIT…AFIA, and WTEY…ALWL. A glycan (N-linked (GlcNAc...) asparagine) is linked at N241. 6 helical membrane passes run 269 to 289, 306 to 326, 353 to 373, 379 to 399, 417 to 437, and 447 to 467; these read MLLD…YAIL, WGPV…LFAA, LPPM…FGWT, SSPW…TTIF, AIAA…LFVW, and WGST…FLFF.

Belongs to the major facilitator superfamily.

The protein resides in the membrane. Functionally, efflux pump; part of the gene cluster that mediates the biosynthesis of bikaverin, a red pigment also considered as a mycotoxin. This chain is Efflux pump bik6, found in Gibberella fujikuroi (strain CBS 195.34 / IMI 58289 / NRRL A-6831) (Bakanae and foot rot disease fungus).